The chain runs to 277 residues: NAD kinase (277 aa).

Aspartate 67 serves as the catalytic Proton acceptor. NAD(+)-binding positions include 67-68, arginine 72, 137-138, lysine 148, arginine 165, aspartate 167, 178-183, leucine 202, and glutamine 236; these read DG, NE, and TGYAMS.

The protein belongs to the NAD kinase family. A divalent metal cation serves as cofactor.

The protein localises to the cytoplasm. The enzyme catalyses NAD(+) + ATP = ADP + NADP(+) + H(+). Involved in the regulation of the intracellular balance of NAD and NADP, and is a key enzyme in the biosynthesis of NADP. Catalyzes specifically the phosphorylation on 2'-hydroxyl of the adenosine moiety of NAD to yield NADP. This chain is NAD kinase, found in Pyrococcus furiosus (strain ATCC 43587 / DSM 3638 / JCM 8422 / Vc1).